We begin with the raw amino-acid sequence, 454 residues long: Phosphoglucosamine mutase (454 aa).

Ser101 (phosphoserine intermediate) is an active-site residue. Mg(2+)-binding residues include Ser101, Asp243, Asp245, and Asp247. The residue at position 101 (Ser101) is a Phosphoserine.

It belongs to the phosphohexose mutase family. Mg(2+) serves as cofactor. In terms of processing, activated by phosphorylation.

It carries out the reaction alpha-D-glucosamine 1-phosphate = D-glucosamine 6-phosphate. In terms of biological role, catalyzes the conversion of glucosamine-6-phosphate to glucosamine-1-phosphate. In Geobacter sp. (strain M21), this protein is Phosphoglucosamine mutase.